The sequence spans 246 residues: MEKIFNISFSMPKSYELKDFIKQYDFFNDDKIAEKLERFFKAINFTNPRHLKKVLNKYAILIEFKNSKIDNERLIPEIIRIENGERKRKGYLFDTVFVLYFIILYEFYYGKYLEVKRYKCRLQTNTGLQSYFERYSLLSQIMKVIKNRNANDMDRVITNLMLLYSQLGYRYNYEIKGRKFYKLVINREIRDKDYNIANELSIELKEAGITVDFWEYIKNNYEDLIEENYPNPYPFTNLFKMVETYL.

This is an uncharacterized protein from Methanocaldococcus jannaschii (strain ATCC 43067 / DSM 2661 / JAL-1 / JCM 10045 / NBRC 100440) (Methanococcus jannaschii).